The primary structure comprises 309 residues: Ribonuclease Z (309 aa).

Zn(2+) is bound by residues histidine 63, histidine 65, aspartate 67, histidine 68, histidine 141, aspartate 208, and histidine 266. Aspartate 67 serves as the catalytic Proton acceptor.

The protein belongs to the RNase Z family. In terms of assembly, homodimer. The cofactor is Zn(2+).

The enzyme catalyses Endonucleolytic cleavage of RNA, removing extra 3' nucleotides from tRNA precursor, generating 3' termini of tRNAs. A 3'-hydroxy group is left at the tRNA terminus and a 5'-phosphoryl group is left at the trailer molecule.. Zinc phosphodiesterase, which displays some tRNA 3'-processing endonuclease activity. Probably involved in tRNA maturation, by removing a 3'-trailer from precursor tRNA. This is Ribonuclease Z from Salinispora arenicola (strain CNS-205).